A 685-amino-acid polypeptide reads, in one-letter code: Amino acid transporter heavy chain SLC3A1 (685 aa).

The span at 1 to 10 (MDEDKGKRDP) shows a compositional bias: basic and acidic residues. A disordered region spans residues 1 to 53 (MDEDKGKRDPIQMSLKGCRTNNGFVQNEDIPEQDPDPGSRDTPQPNAVSIPAP). Residues 1-88 (MDEDKGKRDP…ARYRVPREIL (88 aa)) lie on the Cytoplasmic side of the membrane. Residues 89 to 109 (FWLTVVSVFLLIGATIAIIVI) traverse the membrane as a helical; Signal-anchor for type II membrane protein segment. The Extracellular portion of the chain corresponds to 110 to 685 (SPKCLDWWQA…SALDILYSSC (576 aa)). Residue N213 coordinates Ca(2+). N213, N240, and N260 each carry an N-linked (GlcNAc...) asparagine glycan. C241 and C272 are joined by a disulfide. 4 residues coordinate Ca(2+): D283, F317, L318, and E320. The N-linked (GlcNAc...) asparagine glycan is linked to N331. Residue S385 is modified to Phosphoserine. N-linked (GlcNAc...) asparagine glycosylation is found at N512 and N522. Cystine bridges form between C570–C666 and C673–C685.

As to quaternary structure, disulfide-linked heterodimer composed of the catalytic light subunit SLC7A9 and the heavy subunit SLC3A1. The heterodimer is the minimal functional unit. Assembles in non-covalently linked heterotetramers (dimers of heterodimers) and higher order oligomers; the oligomerization is mediated by SLC3A1 likely to prevent degradation in the endoplasmic reticulum and facilitate heteromer trafficking to the plasma membrane. Disulfide-linked heterodimer composed of the catalytic light subunit SLC7A13 and the heavy subunit SLC3A1. Expressed in the brush border membrane in the kidney (at protein level). Highly expressed in renal tubules in the outer stripe of the outer medulla and medullary ray (at protein level). Also detected in the renal cortex. More abundant in male than female kidneys.

It is found in the cell membrane. Its subcellular location is the apical cell membrane. Its function is as follows. Acts as a chaperone that facilitates biogenesis and trafficking of functional transporter heteromers to the plasma membrane. Associates with SLC7A9 to form a functional transporter complex that mediates the electrogenic exchange between cationic amino acids and neutral amino acids, with a stoichiometry of 1:1. SLC7A9-SLC3A1 transporter has system b(0,+)-like activity with high affinity for extracellular cationic amino acids and L-cystine and lower affinity for intracellular neutral amino acids. Substrate exchange is driven by high concentration of intracellular neutral amino acids and the intracellular reduction of L-cystine to L-cysteine. SLC7A9-SLC3A1 acts as a major transporter for reabsorption of L-cystine and dibasic amino acids across the brush border membrane in early proximal tubules. Associates with SLC7A13 to form a functional complex that transports anionic and neutral amino acids via exchange or facilitated diffusion. SLC7A13-SLC3A1 may act as a major transporter for L-cystine in late proximal tubules, ensuring its reabsorption from the luminal fluid in exchange for cytosolic L-glutamate or L-aspartate. This is Amino acid transporter heavy chain SLC3A1 from Mus musculus (Mouse).